Here is a 270-residue protein sequence, read N- to C-terminus: MGDSKELVWNGSINVQIKLDSRLLVDGVPEGRRLVNIRVPRESHIAIYTPLVLERLRNVLRSDIEELLPKVWYSYKDISLPWSIPFGTLFDIYNGAHKGISGSRDNYINVWKLNLVTDEKFPINVIPIIEGQDQLRKFMMQSWKQCCFILNGSSKRVMSLSLQDSLEVWEGVTERDYAKYSGVIKRILPRTPRRIPVAIHAANGGPIVQTTEPTLTDTSFSQAVEGIVKADFVVCQGIVMYLRDFSDTSLYDVYDKLHSIDGYLHLIANL.

Residue Lys-144 forms a Glycyl lysine isopeptide (Lys-Gly) (interchain with G-Cter in ATG12) linkage.

It belongs to the ATG5 family. As to quaternary structure, conjugated with ATG12. Post-translationally, conjugated to ATG12; which is essential for autophagy.

The protein localises to the preautophagosomal structure membrane. Its function is as follows. Involved in cytoplasm to vacuole transport (Cvt) and autophagic vesicle formation. Autophagy is essential for maintenance of amino acid levels and protein synthesis under nitrogen starvation. Required for selective autophagic degradation of the nucleus (nucleophagy). Also required for mitophagy, which eliminates defective or superfluous mitochondria in order to fulfill cellular energy requirements and prevent excess ROS production. Conjugation with ATG12, through a ubiquitin-like conjugating system involving ATG7 as an E1-like activating enzyme and ATG10 as an E2-like conjugating enzyme, is essential for its function. The ATG12-ATG5 conjugate acts as an E3-like enzyme which is required for lipidation of ATG8 and ATG8 association to the vesicle membranes. The chain is Autophagy protein 5 (ATG5) from Candida glabrata (strain ATCC 2001 / BCRC 20586 / JCM 3761 / NBRC 0622 / NRRL Y-65 / CBS 138) (Yeast).